The chain runs to 218 residues: Thiopurine S-methyltransferase (218 aa).

Residues Trp-10, Leu-45, Glu-66, and Arg-123 each coordinate S-adenosyl-L-methionine.

The protein belongs to the class I-like SAM-binding methyltransferase superfamily. TPMT family.

It localises to the cytoplasm. It carries out the reaction S-adenosyl-L-methionine + a thiopurine = S-adenosyl-L-homocysteine + a thiopurine S-methylether.. This chain is Thiopurine S-methyltransferase, found in Shewanella amazonensis (strain ATCC BAA-1098 / SB2B).